Consider the following 660-residue polypeptide: Squalene--hopene cyclase (660 aa).

The stretch at 73-114 (EAKIGNYLRRVQGAHGGWPLVHDGEFDMSASVKAYFALKMIG) is one PFTB 1 repeat. Aspartate 394 serves as the catalytic Proton donor. PFTB repeat units follow at residues 419 to 460 (IDRG…GALL) and 536 to 586 (IRKA…ALMA).

This sequence belongs to the terpene cyclase/mutase family.

The protein localises to the cell membrane. It carries out the reaction squalene = hop-22(29)-ene. It catalyses the reaction squalene + H2O = hopan-22-ol. The protein operates within secondary metabolite biosynthesis; hopanoid biosynthesis. Its function is as follows. Catalyzes the cyclization of squalene into hopene. The polypeptide is Squalene--hopene cyclase (shc) (Bradyrhizobium diazoefficiens (strain JCM 10833 / BCRC 13528 / IAM 13628 / NBRC 14792 / USDA 110)).